Reading from the N-terminus, the 362-residue chain is MIGSFRDLGRRGLFLLDPETAHGMSIAALKSGLVPTCRVSNDPRLRQIVAGLDFANPLGMAAGYDKNAEVPEALLKLGFGFTEIGTVTPKPQPGNPRPRIFRLVEDEGVINRLGFNNEGHEAALRRLQPIRGNGIIGVNIGANKDSADRIADYVAGIRRFYSVARYFTANISSPNTPGLRDLQARESLSALLSAVLAARDDEAAKAGKKIPVFLKIAPDLTEEGMDDIAAEVLAHALDGLIVSNTTLSRDGLKDQVQAKEAGGLSGKPVFERSTVVLAKMRRRVGAALPIIGVGGVSSAETALEKIRAGADLVQLYSCMVYEGPGLPGRVVAGLSKLLDRERVASIRELRDSRLDYWADRKV.

Residues 62 to 66 (AGYDK) and Thr86 contribute to the FMN site. A substrate-binding site is contributed by Lys66. Residue 111–115 (NRLGF) participates in substrate binding. Asn139 and Asn170 together coordinate FMN. Asn170 is a substrate binding site. Ser173 functions as the Nucleophile in the catalytic mechanism. Asn175 is a binding site for substrate. 2 residues coordinate FMN: Lys215 and Ser243. 244–245 (NT) provides a ligand contact to substrate. Residues Gly266, Gly295, and 316–317 (YS) contribute to the FMN site.

The protein belongs to the dihydroorotate dehydrogenase family. Type 2 subfamily. In terms of assembly, monomer. FMN serves as cofactor.

Its subcellular location is the cell membrane. The catalysed reaction is (S)-dihydroorotate + a quinone = orotate + a quinol. It participates in pyrimidine metabolism; UMP biosynthesis via de novo pathway; orotate from (S)-dihydroorotate (quinone route): step 1/1. In terms of biological role, catalyzes the conversion of dihydroorotate to orotate with quinone as electron acceptor. The chain is Dihydroorotate dehydrogenase (quinone) from Rhizobium rhizogenes (strain K84 / ATCC BAA-868) (Agrobacterium radiobacter).